The primary structure comprises 285 residues: (3S)-malyl-CoA thioesterase (285 aa).

Positions 70 and 122 each coordinate substrate. 2 residues coordinate Mg(2+): E122 and D148.

Belongs to the HpcH/HpaI aldolase family. As to quaternary structure, homodimer or homotrimer. The cofactor is Mg(2+).

The enzyme catalyses (S)-malyl-CoA + H2O = (S)-malate + CoA + H(+). Its function is as follows. Catalyzes the hydrolysis of (3S)-malyl-CoA to (3S)-malate and free CoA. Inactive towards beta-methylmalyl-CoA and other CoA esters. The chain is (3S)-malyl-CoA thioesterase from Cereibacter sphaeroides (strain KD131 / KCTC 12085) (Rhodobacter sphaeroides).